The primary structure comprises 279 residues: Probable thymidylate synthase (279 aa).

Residues Arg21 and 136–137 contribute to the dUMP site; that span reads RR. Cys156 (nucleophile) is an active-site residue. Residues 177–180, Asn188, and 218–220 contribute to the dUMP site; these read RSVD and HIY. Residue Asp180 coordinates (6R)-5,10-methylene-5,6,7,8-tetrahydrofolate.

The protein belongs to the thymidylate synthase family.

The enzyme catalyses dUMP + (6R)-5,10-methylene-5,6,7,8-tetrahydrofolate = 7,8-dihydrofolate + dTMP. Its function is as follows. Sythesizes the thymine necessary for the viral DNA replication. This is Probable thymidylate synthase from Escherichia coli (Enterobacteria phage T5).